Reading from the N-terminus, the 276-residue chain is Bifunctional protein FolD (276 aa).

NADP(+)-binding positions include 157–159 (NRS), S182, and I223.

This sequence belongs to the tetrahydrofolate dehydrogenase/cyclohydrolase family. Homodimer.

The catalysed reaction is (6R)-5,10-methylene-5,6,7,8-tetrahydrofolate + NADP(+) = (6R)-5,10-methenyltetrahydrofolate + NADPH. It catalyses the reaction (6R)-5,10-methenyltetrahydrofolate + H2O = (6R)-10-formyltetrahydrofolate + H(+). Its pathway is one-carbon metabolism; tetrahydrofolate interconversion. Functionally, catalyzes the oxidation of 5,10-methylenetetrahydrofolate to 5,10-methenyltetrahydrofolate and then the hydrolysis of 5,10-methenyltetrahydrofolate to 10-formyltetrahydrofolate. The polypeptide is Bifunctional protein FolD (Thermoplasma acidophilum (strain ATCC 25905 / DSM 1728 / JCM 9062 / NBRC 15155 / AMRC-C165)).